Reading from the N-terminus, the 109-residue chain is UPF0235 protein MA_4097 (109 aa).

Belongs to the UPF0235 family.

The polypeptide is UPF0235 protein MA_4097 (Methanosarcina acetivorans (strain ATCC 35395 / DSM 2834 / JCM 12185 / C2A)).